Reading from the N-terminus, the 2014-residue chain is Leucine-rich repeat serine/threonine-protein kinase 1 (2014 aa).

5 ANK repeats span residues 51–81, 86–116, 119–148, 152–182, and 193–222; these read QCPSMEEIHTAYKQRNLSRARDLLRGVCEES, EKGQLLSIAAAHGDLETVQFLLTEKRVELPT, TDDNPAVVAAHFGHAEVVRELLESLPGPCT, LLNWMLALACQRGHLEVVKLLVLTHGADPEN, and IVRLPLYAAIKAGNEDIAIFLLRHGAYFCS. 13 LRR repeats span residues 279 to 300, 303 to 324, 330 to 351, 353 to 374, 381 to 402, 405 to 426, 427 to 447, 451 to 472, 474 to 495, 498 to 519, 549 to 570, 572 to 594, and 596 to 617; these read QITELDLSANCLPSLPSIIPWG, NLKKLNLSNNQLGELPCVQSSD, RLLEIDISSNKLSHLPPGFLHL, KLQKLTASKNYLERLFEEENAT, KLQELDLADNRLTELPVQFMHS, SLTSLNVSRNNLKSFPDPWSCP, LKCCKASKNALESLPDKMAVF, HLRDADFSENSLKEVPLGLFQL, ALMFLRLQGNQLLSLPPQEKWT, QLKTLDLSRNQLGKNEDGLKTK, SLEVLCLNDNHLDAVPPSVCLL, NLSELYLGNNPGLRELPPELGQL, and NLWQLDIEDLNISNVPAEVRKE. Positions 632-826 constitute a Roc domain; the sequence is KAEKCKLMKM…QLIFHVTCNM (195 aa). Residues Pro-647, Arg-648, Gly-650, Lys-651, Ser-652, Thr-653, Glu-670, His-758, Asp-760, Cys-806, and Lys-807 each contribute to the GDP site. The 398-residue stretch at 840–1237 folds into the COR domain; the sequence is GRLIPRSYIS…PARLFLENSK (398 aa). The residue at position 1061 (Thr-1061) is a Phosphothreonine. Phosphoserine is present on residues Ser-1064 and Ser-1074. Thr-1075 is modified (phosphothreonine). Residues 1242–1525 form the Protein kinase domain; sequence EGENSILGQG…VVSQMKDPTF (284 aa). Residues 1248-1256 and Lys-1270 contribute to the ATP site; that span reads LGQGGSGTV. The active-site Proton acceptor is Asp-1386. WD repeat units lie at residues 1539-1579, 1582-1622, 1623-1668, 1693-1729, 1730-1778, 1779-1948, and 1950-1986; these read AFFS…RMTC, MKLS…QALD, TPAV…SCSY, VKAMEVVNSGSEVWYSNGPGLLVIDCTILDISRRLEP, YAAP…YFCG, DPNP…AVLK, and RELNRHGVLVDAAVVAKDTVVCSFANENTEWCLAVWR. The segment at 1791–1906 is WD40 loop; involved in dimer stabilization; that stretch reads PSVLETPGSH…MDGETFSQHL (116 aa). Residues 1839-1895 are disordered; it reads SMSSYSSSPPHQDPRSPSSLPSSLTSYSSVPFSANYEDSDRLQEPSVTSDRTEHDLS. Positions 1853–1871 are enriched in low complexity; sequence RSPSSLPSSLTSYSSVPFS.

This sequence belongs to the protein kinase superfamily. TKL Ser/Thr protein kinase family. ROCO subfamily. In terms of assembly, homodimer. The homodimer is autoinhibited and stabilized by its N-terminal residues and ANK repeats. Interacts with CSK. Mg(2+) is required as a cofactor. It depends on Mn(2+) as a cofactor. Autophosphorylated. Autophosphorylation in inhibited in its dimeric state. Phosphorylated by protein kinase C isozymes PRKCA, PRKCB, PRKCG, PRKCE, PRKCZ and PRKCT at Ser-1064, Ser-1074 and Thr-1075. Phosphorylation at these residues activates the kinase activity of LRRK1 to phosphorylate RAB7A. In terms of tissue distribution, expressed in osteoclasts and bone marrow stromal cells.

It is found in the cytoplasm. Its subcellular location is the cell membrane. It carries out the reaction L-seryl-[protein] + ATP = O-phospho-L-seryl-[protein] + ADP + H(+). It catalyses the reaction L-threonyl-[protein] + ATP = O-phospho-L-threonyl-[protein] + ADP + H(+). With respect to regulation, activated by phosphorylation by PKC. Binds both GTP and GDP; binding of GTP stimulates kinase activity. Sterically autoinhibited in its dimeric state. Serine/threonine-protein kinase which phosphorylates RAB proteins involved in intracellular trafficking. Phosphorylates RAB7A; this activity is dependent on protein kinase C (PKC) activation. Plays a role in the negative regulation of bone mass, acting through the maturation of osteoclasts. In Mus musculus (Mouse), this protein is Leucine-rich repeat serine/threonine-protein kinase 1.